The primary structure comprises 100 residues: Small ribosomal subunit protein uS14 (100 aa).

Belongs to the universal ribosomal protein uS14 family. Part of the 30S ribosomal subunit. Contacts proteins S3 and S10.

Binds 16S rRNA, required for the assembly of 30S particles and may also be responsible for determining the conformation of the 16S rRNA at the A site. The polypeptide is Small ribosomal subunit protein uS14 (Microcystis aeruginosa (strain NIES-843 / IAM M-2473)).